A 279-amino-acid polypeptide reads, in one-letter code: Protein gustavus (279 aa).

Residues 36–233 form the B30.2/SPRY domain; sequence PARIDILLDM…ITMRYIGGLD (198 aa). One can recognise an SOCS box domain in the interval 234–279; sequence PEPLPLMDLCRRTIRQKIGRTNLEEHIQQLQLPLSMKTYLLYKNRR. Residues 236–279 are involved in binding to the Elongin BC complex; sequence PLPLMDLCRRTIRQKIGRTNLEEHIQQLQLPLSMKTYLLYKNRR.

Belongs to the SPSB family. As to quaternary structure, interacts (via B30.2/SPRY domain) with vas; this interaction may be necessary for the transport of vas to the posterior pole of the oocyte. Interacts with Cul-5. May associate with the Elongin BC complex composed of Elongin-B and Elongin-C. As to expression, expressed in ovaries, primarily in nurse cells and oocytes (at protein level).

It localises to the cytoplasm. The protein resides in the nucleus. Involved in the localization of vas to the posterior pole of the oocyte. Required maternally in the germ line for efficient primordial germ cell formation. This is Protein gustavus (gus) from Drosophila melanogaster (Fruit fly).